Consider the following 131-residue polypeptide: Phosphoribosyl-AMP cyclohydrolase (131 aa).

D78 contacts Mg(2+). C79 contacts Zn(2+). D80 and D82 together coordinate Mg(2+). 2 residues coordinate Zn(2+): C96 and C103.

Belongs to the PRA-CH family. In terms of assembly, homodimer. The cofactor is Mg(2+). Zn(2+) serves as cofactor.

It localises to the cytoplasm. It catalyses the reaction 1-(5-phospho-beta-D-ribosyl)-5'-AMP + H2O = 1-(5-phospho-beta-D-ribosyl)-5-[(5-phospho-beta-D-ribosylamino)methylideneamino]imidazole-4-carboxamide. Its pathway is amino-acid biosynthesis; L-histidine biosynthesis; L-histidine from 5-phospho-alpha-D-ribose 1-diphosphate: step 3/9. In terms of biological role, catalyzes the hydrolysis of the adenine ring of phosphoribosyl-AMP. This Neisseria meningitidis serogroup C / serotype 2a (strain ATCC 700532 / DSM 15464 / FAM18) protein is Phosphoribosyl-AMP cyclohydrolase.